A 486-amino-acid chain; its full sequence is Hexokinase-2 (486 aa).

A Phosphoserine modification is found at Ser15. A Hexokinase domain is found at 21–469; that stretch reads KELMQQIENF…SGAGAAVIAA (449 aa). Phosphothreonine is present on Thr38. Positions 75–209 are hexokinase small subdomain; that stretch reads TGKESGDFLA…NIPIEVVALI (135 aa). Residues 86–91 and Lys111 each bind ATP; that span reads DLGGTN. A Phosphoserine modification is found at Ser158. Substrate contacts are provided by residues Ser158, 175-176, 210-211, and Asn237; these read TK and ND. The interval 210–458 is hexokinase large subdomain; it reads NDTTGTLVAS…YPIKIVPAED (249 aa). A Phosphoserine modification is found at Ser245. Residue Glu269 participates in substrate binding. At Ser272 the chain carries Phosphoserine. Residue Glu302 participates in substrate binding. Residues 307-308, 344-348, and 419-423 contribute to the ATP site; these read GY, TSYPA, and SVYNR.

This sequence belongs to the hexokinase family. As to quaternary structure, homodimer.

It carries out the reaction a D-hexose + ATP = a D-hexose 6-phosphate + ADP + H(+). The catalysed reaction is D-fructose + ATP = D-fructose 6-phosphate + ADP + H(+). It catalyses the reaction D-glucose + ATP = D-glucose 6-phosphate + ADP + H(+). Its pathway is carbohydrate metabolism; hexose metabolism. It participates in carbohydrate degradation; glycolysis; D-glyceraldehyde 3-phosphate and glycerone phosphate from D-glucose: step 1/4. Subject to allosteric control. Substrate inhibition by ATP. Catalyzes the phosphorylation of hexose, such as D-glucose and D-fructose, to hexose 6-phosphate (D-glucose 6-phosphate and D-fructose 6-phosphate, respectively). Mediates the initial step of glycolysis by catalyzing phosphorylation of D-glucose to D-glucose 6-phosphate. The polypeptide is Hexokinase-2 (HXK2) (Saccharomyces cerevisiae (strain ATCC 204508 / S288c) (Baker's yeast)).